Here is a 393-residue protein sequence, read N- to C-terminus: Staphopain B (393 aa).

The first 36 residues, 1 to 36, serve as a signal peptide directing secretion; the sequence is MNSSCKTRVFNIISIIMVSMLILSLGAFANNNKAKA. The propeptide occupies 37-219; it reads DSHSKQLEIN…KVEENEAIQE (183 aa). Residues Cys-243, His-340, and Asn-360 contribute to the active site.

Belongs to the peptidase C47 family. In terms of assembly, in the cytoplasm, prematurely activated/folded SspB forms a stable non-covalent complex with SspC. In terms of processing, proteolytically cleaved by staphylococcal serine protease (SspA).

The protein resides in the secreted. Its activity is regulated as follows. Prematurely activated/folded staphopain B is inhibited by staphostatin B (SspC), which is probably required to protect staphylococcal cytoplasmic proteins from degradation by SspB. Its function is as follows. Cysteine protease that plays an important role in the inhibition of host innate immune response. Degrades host elastin, fibrogen, fibronectin and kininogen. Blocks phagocytosis of opsonised S.aureus by neutrophils and monocytes by inducing their death in a proteolytic activity-dependent manner. Decreases surface expression of the 'don't eat me' signal CD31 on neutrophils. Cleaves host galectin-3/LGALS3, thereby inhibiting the neutrophil-activating ability of the lectin. The protein is Staphopain B (sspB) of Staphylococcus aureus.